A 662-amino-acid chain; its full sequence is Hypoxia-inducible factor 3-alpha (662 aa).

A disordered region spans residues 1–25 (MDWDQDRSNTELRKEKSRDAARSRR). The 54-residue stretch at 12-65 (LRKEKSRDAARSRRSQETEVLYQLAHTLPFARGVSAHLDKASIMRLTISYLRMH) folds into the bHLH domain. The interval 75–98 (QVEKGGEPLDACYLKALEGFVMVL) is nuclear localization signal (isoform 2). PAS domains follow at residues 80–150 (GEPL…PNLS) and 225–295 (PHPA…LSKG). The segment at 228 to 272 (ASLEPPLGRGAFLSRHSLDMKFTYCDERIAEVAGYSPDDLIGCSA) is nuclear export signal (isoform 2). Disordered regions lie at residues 352 to 377 (EQTE…GNSV) and 416 to 446 (PILD…DLPD). The short motif at 414–418 (MAPIL) is the LRRLL element. The segment covering 426–437 (TPSTPQATRRPQ) has biased composition (low complexity). An ODD region spans residues 448-581 (LTVGLENAHR…SEDKGLELLE (134 aa)). The interval 450–501 (VGLENAHRLSTAQKNKTVETDLDIAQDPDTLDLEMLAPYISMDDDFQLNSSE) is NTAD. Lysine 463 participates in a covalent cross-link: Glycyl lysine isopeptide (Lys-Gly) (interchain with G-Cter in ubiquitin). The LAPYISMD motif lies at 485-492 (LAPYISMD). Residue proline 487 is modified to 4-hydroxyproline. The segment at 500 to 595 (SEQLPKVHRR…KRSPRLEPGS (96 aa)) is disordered. Basic residues predominate over residues 505-521 (KVHRRPPRVARRPRARS). A Glycyl lysine isopeptide (Lys-Gly) (interchain with G-Cter in ubiquitin) cross-link involves residue lysine 565. A compositionally biased stretch (basic and acidic residues) spans 572–584 (SEDKGLELLETKP).

Isoform 1 interacts with ARNT. Isoform 2 interacts with HIF1A. Isoform 2 interacts EPAS1. Isoform 2 interacts (via C-terminus domain) with BAD; the interaction reduces the binding between BAD and BAX. Isoform 2 (via C-terminus domain) interacts with BCL2L2 and MCL1. Interacts with VHL. In terms of processing, in normoxia, hydroxylated on Pro-487 in the oxygen-dependent degradation domain (ODD) by PHD. The hydroxylated proline promotes interaction with VHL, initiating rapid ubiquitination and subsequent proteasomal degradation. Ubiquitinated; ubiquitination occurs in a VHL- and oxygen-dependent pathway and subsequently targeted for proteasomal degradation. Isoform 3 is expressed in endothelial cells of vessels and capillaries in alveoli of the neonatal lung (at protein level). Expressed in lung, brain, heart and kidney. Isoform 2 is expressed in heart and lung. Isoform 2 is highly expressed in the epithelial cell layer of the cornea with lower expression in the layers of ganglion cells, inner nuclear cells, and rods and cones of the retina. Isoform 2 is expressed in the cerebellum only in the Purkinje cell layer.

The protein resides in the nucleus. The protein localises to the cytoplasm. It is found in the nucleus speckle. Its subcellular location is the mitochondrion. Its function is as follows. Acts as a transcriptional regulator in adaptive response to low oxygen tension. Acts as a regulator of hypoxia-inducible gene expression. Plays a role in the development of the cardiorespiratory system. Functionally, acts as a positive regulator of hypoxia-inducible gene expression. Associates to core DNA sequence 5'-TACGTG-3' within the hypoxia response element (HRE) of target gene promoters in a ARNT-dependent manner, and hence also participates in the transcriptional activation of reporter genes driven by HRE. Attenuates the ability of transcription factor HIF1A, EPAS1 and the HIF1A-ARNT complex to bind to hypoxia-responsive elements (HRE) located within the enhancer/promoter of hypoxia-inducible target genes and hence inhibits HRE-driven transcriptional activation. Functions as an inhibitor of angiogenesis in hypoxic cells of the cornea. May act as a tumor suppressor. May also be involved in apoptosis. In terms of biological role, attenuates the ability of transcription factor HIF1A, EPAS1 and the HIF1A-ARNT complex to bind to hypoxia-responsive elements (HRE) located within the enhancer/promoter of hypoxia-inducible target genes and hence inhibits HRE-driven transcriptional activation. Also plays a role in the development of the lung and heart during embryonic and neonatal stages. The chain is Hypoxia-inducible factor 3-alpha from Mus musculus (Mouse).